Here is a 774-residue protein sequence, read N- to C-terminus: Probable E3 ubiquitin-protein ligase HECTD2 (774 aa).

The interval 1–51 is disordered; the sequence is MSEAARDLSPGAPPAVAAAAPEERKGKEPEREKLPPIVTAGAAAGLDRGSK. A Phosphoserine modification is found at Ser9. A compositionally biased stretch (basic and acidic residues) spans 21–34; sequence PEERKGKEPEREKL. Positions 435 to 774 constitute an HECT domain; sequence KRADLKKKLK…ISNSEGFGLE (340 aa). The active-site Glycyl thioester intermediate is the Cys742.

The catalysed reaction is S-ubiquitinyl-[E2 ubiquitin-conjugating enzyme]-L-cysteine + [acceptor protein]-L-lysine = [E2 ubiquitin-conjugating enzyme]-L-cysteine + N(6)-ubiquitinyl-[acceptor protein]-L-lysine.. It participates in protein modification; protein ubiquitination. E3 ubiquitin-protein ligase which accepts ubiquitin from an E2 ubiquitin-conjugating enzyme in the form of a thioester and then directly transfers the ubiquitin to targeted substrates. The polypeptide is Probable E3 ubiquitin-protein ligase HECTD2 (Hectd2) (Mus musculus (Mouse)).